We begin with the raw amino-acid sequence, 126 residues long: Holo-[acyl-carrier-protein] synthase (126 aa).

Mg(2+) contacts are provided by Asp-9 and Glu-58.

Belongs to the P-Pant transferase superfamily. AcpS family. Mg(2+) is required as a cofactor.

Its subcellular location is the cytoplasm. The catalysed reaction is apo-[ACP] + CoA = holo-[ACP] + adenosine 3',5'-bisphosphate + H(+). Functionally, transfers the 4'-phosphopantetheine moiety from coenzyme A to a Ser of acyl-carrier-protein. The chain is Holo-[acyl-carrier-protein] synthase from Aliivibrio fischeri (strain MJ11) (Vibrio fischeri).